A 299-amino-acid polypeptide reads, in one-letter code: tRNA-cytidine(32) 2-sulfurtransferase (299 aa).

The short motif at 56–61 (SGGKDS) is the PP-loop motif element. Residues Cys-131, Cys-134, and Cys-222 each contribute to the [4Fe-4S] cluster site.

Belongs to the TtcA family. In terms of assembly, homodimer. Mg(2+) is required as a cofactor. It depends on [4Fe-4S] cluster as a cofactor.

It localises to the cytoplasm. The enzyme catalyses cytidine(32) in tRNA + S-sulfanyl-L-cysteinyl-[cysteine desulfurase] + AH2 + ATP = 2-thiocytidine(32) in tRNA + L-cysteinyl-[cysteine desulfurase] + A + AMP + diphosphate + H(+). It functions in the pathway tRNA modification. Catalyzes the ATP-dependent 2-thiolation of cytidine in position 32 of tRNA, to form 2-thiocytidine (s(2)C32). The sulfur atoms are provided by the cysteine/cysteine desulfurase (IscS) system. The protein is tRNA-cytidine(32) 2-sulfurtransferase of Xylella fastidiosa (strain M23).